The chain runs to 258 residues: Short-chain dehydrogenase chyC (258 aa).

7 residues coordinate NADP(+): R37, D55, N81, Y154, K158, V185, and T187. The active-site Proton donor is the Y154. The Lowers pKa of active site Tyr role is filled by K158.

It belongs to the short-chain dehydrogenases/reductases (SDR) family.

Functionally, short-chain dehydrogenase; part of the gene cluster that mediates the biosynthesis of the yellow pigment chrysogine. the NRPS chyA mediates the condensation of anthranilic acid and alanine into the intermediate 2-(2-aminopropanamido)benzoic acid. The remainder of the pathway is highly branched yielding at least 13 chrysogine-related compounds. The malonyl transferase chyE converts 2-(2-aminopropanamido)benzoic acid and 2-(2-aminopropanamido)benzamidine into 2-(2-(2-carboxyacetamido)propanamido)benzoic acid and 3-((1-((2-carbamoylphenyl)amino)-1-oxopropan-2-yl)amino)-3-oxopropanoic acid, respectively. ChyD is an amidase, being responsible for the amidation of the carboxylic acid moiety of 2-(2-aminopropanamido)benzoic acid, 2-(2-(2-carboxyacetamido)propanamido)benzoic acid and 2-(2-((4-amino-1-carboxy-4-oxobutyl)amino)propanamido)benzoic acid. ChyC is involved in the same reactions as ChyD, but plays a more minor role in the amidation reactions compared to chyD. The oxidoreductases chyH and chyM are involved in oxidation reactions that form N-pyruvoylanthranilamide from 2-(2-aminopropanamido)benzamidine and (1-((2-carbamoylphenyl)amino)-1-oxopropan-2-yl)glutamine, respectively. N-pyruvoylanthranilamide is further converted via two further branches in the pathway, yielding chrysogine and additional chrysogine-related coumpounds. Chrysogine is likely formed by a spontaneous ring closure from N-pyruvoylanthranilamide. The sequence is that of Short-chain dehydrogenase chyC from Penicillium rubens (strain ATCC 28089 / DSM 1075 / NRRL 1951 / Wisconsin 54-1255) (Penicillium chrysogenum).